The primary structure comprises 34 residues: Photosystem II reaction center protein T (34 aa).

Residues Ala3–Phe23 traverse the membrane as a helical segment.

The protein belongs to the PsbT family. In terms of assembly, PSII is composed of 1 copy each of membrane proteins PsbA, PsbB, PsbC, PsbD, PsbE, PsbF, PsbH, PsbI, PsbJ, PsbK, PsbL, PsbM, PsbT, PsbY, PsbZ, Psb30/Ycf12, at least 3 peripheral proteins of the oxygen-evolving complex and a large number of cofactors. It forms dimeric complexes.

It is found in the plastid. The protein localises to the chloroplast thylakoid membrane. Found at the monomer-monomer interface of the photosystem II (PS II) dimer, plays a role in assembly and dimerization of PSII. PSII is a light-driven water plastoquinone oxidoreductase, using light energy to abstract electrons from H(2)O, generating a proton gradient subsequently used for ATP formation. The sequence is that of Photosystem II reaction center protein T from Klebsormidium bilatum (Filamentous green alga).